The primary structure comprises 629 residues: tRNA uridine 5-carboxymethylaminomethyl modification enzyme MnmG (629 aa).

An FAD-binding site is contributed by 14–19 (GAGHAG). 274–288 (GPRYCPSIEDKVVRF) is an NAD(+) binding site.

It belongs to the MnmG family. In terms of assembly, homodimer. Heterotetramer of two MnmE and two MnmG subunits. It depends on FAD as a cofactor.

The protein resides in the cytoplasm. NAD-binding protein involved in the addition of a carboxymethylaminomethyl (cmnm) group at the wobble position (U34) of certain tRNAs, forming tRNA-cmnm(5)s(2)U34. This is tRNA uridine 5-carboxymethylaminomethyl modification enzyme MnmG from Xylella fastidiosa (strain 9a5c).